A 93-amino-acid polypeptide reads, in one-letter code: Phosphoribosyl-ATP pyrophosphatase (93 aa).

Belongs to the PRA-PH family.

It is found in the cytoplasm. The catalysed reaction is 1-(5-phospho-beta-D-ribosyl)-ATP + H2O = 1-(5-phospho-beta-D-ribosyl)-5'-AMP + diphosphate + H(+). Its pathway is amino-acid biosynthesis; L-histidine biosynthesis; L-histidine from 5-phospho-alpha-D-ribose 1-diphosphate: step 2/9. The chain is Phosphoribosyl-ATP pyrophosphatase from Rhodococcus jostii (strain RHA1).